The following is a 135-amino-acid chain: NADPH-dependent 7-cyano-7-deazaguanine reductase (135 aa).

Cysteine 48 (thioimide intermediate) is an active-site residue. Aspartate 55 serves as the catalytic Proton donor. Substrate is bound by residues 70-72 (IEL) and 89-90 (HE).

The protein belongs to the GTP cyclohydrolase I family. QueF type 1 subfamily.

It localises to the cytoplasm. It carries out the reaction 7-aminomethyl-7-carbaguanine + 2 NADP(+) = 7-cyano-7-deazaguanine + 2 NADPH + 3 H(+). It participates in tRNA modification; tRNA-queuosine biosynthesis. In terms of biological role, catalyzes the NADPH-dependent reduction of 7-cyano-7-deazaguanine (preQ0) to 7-aminomethyl-7-deazaguanine (preQ1). The chain is NADPH-dependent 7-cyano-7-deazaguanine reductase from Prochlorococcus marinus (strain MIT 9303).